Consider the following 337-residue polypeptide: Anthranilate phosphoribosyltransferase (337 aa).

Residues Gly80, 83 to 84 (GD), Thr88, 90 to 93 (NIST), 108 to 116 (KHGNRAVSS), and Ser120 contribute to the 5-phospho-alpha-D-ribose 1-diphosphate site. Residue Gly80 coordinates anthranilate. Mg(2+) is bound at residue Ser92. Anthranilate is bound at residue Asn111. Arg166 serves as a coordination point for anthranilate. Asp224 and Glu225 together coordinate Mg(2+).

This sequence belongs to the anthranilate phosphoribosyltransferase family. In terms of assembly, homodimer. Mg(2+) serves as cofactor.

It carries out the reaction N-(5-phospho-beta-D-ribosyl)anthranilate + diphosphate = 5-phospho-alpha-D-ribose 1-diphosphate + anthranilate. Its pathway is amino-acid biosynthesis; L-tryptophan biosynthesis; L-tryptophan from chorismate: step 2/5. In terms of biological role, catalyzes the transfer of the phosphoribosyl group of 5-phosphorylribose-1-pyrophosphate (PRPP) to anthranilate to yield N-(5'-phosphoribosyl)-anthranilate (PRA). This chain is Anthranilate phosphoribosyltransferase, found in Anaeromyxobacter dehalogenans (strain 2CP-C).